A 394-amino-acid chain; its full sequence is MLDLYEHTDKYSSKNYSPLKLALAKGRGAKVWDIEDNCYIDCISGFSVVNQGHCHPKIIKALQEQSQRITMVSRALYSDNLGKWEEKICKLANKENVLPMNTGTEAVETAIKMARKWGADIKNIDESSSEIIAMNGNFHGRTLGSLSLSSQDSYKKGFGPLLNNIHYADFGDIEQLKKLINNQTTAIILEPIQGEGGVNIPPTHFIQEVRQLCNEYNVLLIADEIQVGLGRTGKMFAMEWENTEPDIYLLGKSLGGGLYPISAVLANQDVMSVLTPGTHGSTFGGNPLACAVSMAALDVLNEEHLVQNALDLGDRLLKHLQQIESELIVEVRGRGLFIGIELNVAAQDYCEQMINKGVLCKETQGNIIRIAPPLVIDKDEIDEVIRVITEVLEK.

An N6-(pyridoxal phosphate)lysine modification is found at Lys252.

Belongs to the class-III pyridoxal-phosphate-dependent aminotransferase family. OAT subfamily. Pyridoxal 5'-phosphate serves as cofactor.

The protein localises to the cytoplasm. It carries out the reaction a 2-oxocarboxylate + L-ornithine = L-glutamate 5-semialdehyde + an L-alpha-amino acid. It functions in the pathway amino-acid biosynthesis; L-proline biosynthesis; L-glutamate 5-semialdehyde from L-ornithine: step 1/1. Functionally, catalyzes the interconversion of ornithine to glutamate semialdehyde. This chain is Ornithine aminotransferase 1, found in Staphylococcus saprophyticus subsp. saprophyticus (strain ATCC 15305 / DSM 20229 / NCIMB 8711 / NCTC 7292 / S-41).